A 152-amino-acid polypeptide reads, in one-letter code: SXP/RAL-2 family protein Ani s 5 (152 aa).

The N-terminal stretch at 1–18 (MKTLIVAALFCTIGMALA) is a signal peptide. 4 necessary for IgE-binding regions span residues 25 to 42 (PPFL…FFEL), 49 to 54 (KTDPEI), 58 to 66 (LDAWVDTLG), and 103 to 120 (KKAD…SLNG). IgG4-binding regions lie at residues 49 to 68 (KTDP…LGGD) and 118 to 137 (LNGI…LPQS). The interval 127-146 (IQAIYKTLPQSVKDELEKGI) is igE-binding and IgG4-binding.

This sequence belongs to the SXP/RAL-2 family. As to quaternary structure, monomer. Excretory gland, ventriculus, and the luminal epithelium of the intestine of the larvae.

The protein resides in the secreted. This chain is SXP/RAL-2 family protein Ani s 5, found in Anisakis simplex (Herring worm).